The primary structure comprises 458 residues: Probable asparagine--tRNA ligase, cytoplasmic (458 aa).

This sequence belongs to the class-II aminoacyl-tRNA synthetase family.

It is found in the cytoplasm. It catalyses the reaction tRNA(Asn) + L-asparagine + ATP = L-asparaginyl-tRNA(Asn) + AMP + diphosphate + H(+). This chain is Probable asparagine--tRNA ligase, cytoplasmic, found in Enterocytozoon bieneusi (strain H348) (Microsporidian parasite).